The chain runs to 242 residues: Biosynthetic peptidoglycan transglycosylase (242 aa).

Residues 19–39 traverse the membrane as a helical segment; sequence LLLACAVLWGGGVALFSIVPV.

Belongs to the glycosyltransferase 51 family.

The protein localises to the cell inner membrane. It carries out the reaction [GlcNAc-(1-&gt;4)-Mur2Ac(oyl-L-Ala-gamma-D-Glu-L-Lys-D-Ala-D-Ala)](n)-di-trans,octa-cis-undecaprenyl diphosphate + beta-D-GlcNAc-(1-&gt;4)-Mur2Ac(oyl-L-Ala-gamma-D-Glu-L-Lys-D-Ala-D-Ala)-di-trans,octa-cis-undecaprenyl diphosphate = [GlcNAc-(1-&gt;4)-Mur2Ac(oyl-L-Ala-gamma-D-Glu-L-Lys-D-Ala-D-Ala)](n+1)-di-trans,octa-cis-undecaprenyl diphosphate + di-trans,octa-cis-undecaprenyl diphosphate + H(+). It participates in cell wall biogenesis; peptidoglycan biosynthesis. Functionally, peptidoglycan polymerase that catalyzes glycan chain elongation from lipid-linked precursors. In Klebsiella oxytoca, this protein is Biosynthetic peptidoglycan transglycosylase.